A 191-amino-acid chain; its full sequence is Zinc finger protein GIS2 (191 aa).

Residues 55-77 form a C2H2-type zinc finger; the sequence is FKCHYCFRNFPTSQALGGHQNAH.

In terms of tissue distribution, expressed in inflorescence meristems, floral meristems and stem epidermis.

Its subcellular location is the nucleus. Probable transcription factor required for the initiation of inflorescence trichomes in response to gibberellin and cytokinin. Is not involved in the regulation of trichome branching. Is functionally equivalent to ZFP8. In Arabidopsis thaliana (Mouse-ear cress), this protein is Zinc finger protein GIS2 (GIS2).